Here is a 155-residue protein sequence, read N- to C-terminus: Gas vesicle protein K (155 aa).

It belongs to the gas vesicle GvpK family.

It localises to the gas vesicle. In terms of biological role, might be involved in nucleating gas vesicle formation. Gas vesicles (GV) are hollow, gas filled proteinaceous nanostructures. During planktonic growth they allow positioning of the organism at a favorable depth for light or nutrient acquisition. Its function is as follows. Cluster expression in E.coli (gvpA1-gvpA2-gvpC-gvpN-gvpJ-gvpK-gvpF-gvpG-gvpV-gvpW) allows cells to float and produces irregularly shaped gas vesicles. This chain is Gas vesicle protein K, found in Nostoc sp. (strain PCC 7120 / SAG 25.82 / UTEX 2576).